The chain runs to 118 residues: MIKIILISLALIFVIIGALISALAAIGLLRLEDVYSRAHAAGKASTLGAMSLLFGTFLYFIATQGFVNMQLIVAIIFVLITGPLSSHMIMKAAYNIKTPYTKKTKVDEISEDLKDTKL.

Transmembrane regions (helical) follow at residues 4–24 (IILI…SALA), 38–58 (AHAA…GTFL), and 60–80 (FIAT…FVLI).

Belongs to the CPA3 antiporters (TC 2.A.63) subunit G family. In terms of assembly, may form a heterooligomeric complex that consists of seven subunits: mnhA1, mnhB1, mnhC1, mnhD1, mnhE1, mnhF1 and mnhG1.

It is found in the cell membrane. Mnh complex is a Na(+)/H(+) antiporter involved in Na(+) excretion. The sequence is that of Na(+)/H(+) antiporter subunit G1 (mnhG1) from Staphylococcus aureus (strain Mu3 / ATCC 700698).